Here is a 180-residue protein sequence, read N- to C-terminus: MYHVIAATTNPAKINAITLAFDDVYGPGQYRIEGVNVDSGVPLQPIGSTETRIGARQRVKNARQVRPKADFWVGIEAGIEDNMTFAWMVIEHLQARGESRSASLMLPDIILQGIRQGRELGDEMAVLSGISNVKQQGGAIGIFTQGKLTRTSVYHQALLLALVPFHNEIYQRPSPSKPAI.

8-13 (TTNPAK) lines the substrate pocket. A Mg(2+)-binding site is contributed by Asp38.

It belongs to the YjjX NTPase family. In terms of assembly, homodimer. Mg(2+) is required as a cofactor. Mn(2+) serves as cofactor.

It catalyses the reaction XTP + H2O = XDP + phosphate + H(+). It carries out the reaction ITP + H2O = IDP + phosphate + H(+). In terms of biological role, phosphatase that hydrolyzes non-canonical purine nucleotides such as XTP and ITP to their respective diphosphate derivatives. Probably excludes non-canonical purines from DNA/RNA precursor pool, thus preventing their incorporation into DNA/RNA and avoiding chromosomal lesions. The protein is Inosine/xanthosine triphosphatase of Yersinia pseudotuberculosis serotype O:1b (strain IP 31758).